A 326-amino-acid polypeptide reads, in one-letter code: Probable sodium/potassium-transporting ATPase subunit beta-3 (326 aa).

The Cytoplasmic portion of the chain corresponds to 1–59 (MMSSRTRKIYLFVFMFISTSLQLMNGEAKAEPETFRQFLYNKQKGTVLGRTGTSWCQIT). A helical; Signal-anchor for type II membrane protein transmembrane segment spans residues 60 to 80 (VFYIIFYIFLSAFFIGCLAIF). Residues 81-326 (LKTLDPKVPR…DKKPVAAPAA (246 aa)) lie on the Lumenal side of the membrane. N-linked (GlcNAc...) asparagine glycans are attached at residues Asn-144 and Asn-147. Cys-234 and Cys-291 are disulfide-bonded.

It belongs to the X(+)/potassium ATPases subunit beta family. The sodium/potassium-transporting ATPase is composed of a catalytic alpha subunit, an auxiliary non-catalytic beta subunit and an additional regulatory subunit.

It localises to the cell membrane. This is the non-catalytic component of the active enzyme, which catalyzes the hydrolysis of ATP coupled with the exchange of Na(+) and K(+) ions across the plasma membrane. The beta subunit regulates, through assembly of alpha/beta heterodimers, the number of sodium pumps transported to the plasma membrane. Implicated in genomic response to various soil bacteria that affects fitness, lifespan and brood size. This is Probable sodium/potassium-transporting ATPase subunit beta-3 (nkb-3) from Caenorhabditis briggsae.